Here is a 163-residue protein sequence, read N- to C-terminus: Large ribosomal subunit protein uL10 (163 aa).

This sequence belongs to the universal ribosomal protein uL10 family. In terms of assembly, part of the ribosomal stalk of the 50S ribosomal subunit. The N-terminus interacts with L11 and the large rRNA to form the base of the stalk. The C-terminus forms an elongated spine to which L12 dimers bind in a sequential fashion forming a multimeric L10(L12)X complex.

Forms part of the ribosomal stalk, playing a central role in the interaction of the ribosome with GTP-bound translation factors. The protein is Large ribosomal subunit protein uL10 of Haemophilus influenzae (strain 86-028NP).